The sequence spans 227 residues: Cytidylate kinase (227 aa).

12 to 20 (GPSGSGKGT) contributes to the ATP binding site.

This sequence belongs to the cytidylate kinase family. Type 1 subfamily.

It localises to the cytoplasm. The enzyme catalyses CMP + ATP = CDP + ADP. It catalyses the reaction dCMP + ATP = dCDP + ADP. The polypeptide is Cytidylate kinase (Nitrosococcus oceani (strain ATCC 19707 / BCRC 17464 / JCM 30415 / NCIMB 11848 / C-107)).